An 851-amino-acid polypeptide reads, in one-letter code: Venom phosphodiesterase 1 (851 aa).

An N-terminal signal peptide occupies residues 1 to 23; the sequence is MIQQKVLFISLVAVTLGLGLGLG. 2 SMB domains span residues 30–73 and 74–118; these read PQVS…VLPT and QSWS…GETS. Cystine bridges form between Cys-34/Cys-38, Cys-34/Cys-51, Cys-38/Cys-69, Cys-49/Cys-51, Cys-49/Cys-62, Cys-55/Cys-61, Cys-62/Cys-69, Cys-78/Cys-83, Cys-78/Cys-95, Cys-83/Cys-113, Cys-93/Cys-95, Cys-93/Cys-106, Cys-99/Cys-105, Cys-106/Cys-113, Cys-124/Cys-170, and Cys-132/Cys-344. Asn-39 carries an N-linked (GlcNAc...) asparagine glycan. Residues 58–60 carry the Cell attachment site motif; sequence RQA. 2 residues coordinate a divalent metal cation: Asp-147 and Thr-185. The active-site AMP-threonine intermediate is the Thr-185. N-linked (GlcNAc...) asparagine glycosylation is found at Asn-216, Asn-259, and Asn-270. Lys-271 provides a ligand contact to AMP. A divalent metal cation is bound by residues Asp-305, His-309, Asp-352, and His-353. His-309 is a binding site for AMP. 6 disulfide bridges follow: Cys-360/Cys-457, Cys-408/Cys-793, Cys-541/Cys-599, Cys-554/Cys-654, Cys-556/Cys-639, and Cys-762/Cys-772. Asn-405 carries an N-linked (GlcNAc...) asparagine glycan. His-462 serves as a coordination point for a divalent metal cation. N-linked (GlcNAc...) asparagine glycans are attached at residues Asn-512, Asn-594, Asn-674, and Asn-745.

Belongs to the nucleotide pyrophosphatase/phosphodiesterase family. In terms of assembly, monomer cleaved in two subunits; disulfide-linked. Is synthesized as a single-chain protein and is subsequently cleaved to form a two-subunit protein held together with disulfide bonds. A divalent metal cation serves as cofactor. In terms of tissue distribution, expressed by venom gland.

The protein localises to the secreted. The catalysed reaction is ADP + H2O = AMP + phosphate + H(+). Functionally, hydrolyzes ADP with high activity. Shows weak or no activity on 5'-AMP, 5'-GMP, 3'-AMP, ATP, cAMP, and cGMP. Is devoid of monophosphatase and proteinase activities. Dose-dependently inhibits platelet aggregation induced by ADP and collagen. The polypeptide is Venom phosphodiesterase 1 (Crotalus adamanteus (Eastern diamondback rattlesnake)).